Reading from the N-terminus, the 363-residue chain is UDP-3-O-acylglucosamine N-acyltransferase (363 aa).

Residue histidine 266 is the Proton acceptor of the active site.

It belongs to the transferase hexapeptide repeat family. LpxD subfamily. Homotrimer.

The enzyme catalyses a UDP-3-O-[(3R)-3-hydroxyacyl]-alpha-D-glucosamine + a (3R)-hydroxyacyl-[ACP] = a UDP-2-N,3-O-bis[(3R)-3-hydroxyacyl]-alpha-D-glucosamine + holo-[ACP] + H(+). The protein operates within bacterial outer membrane biogenesis; LPS lipid A biosynthesis. Its function is as follows. Catalyzes the N-acylation of UDP-3-O-acylglucosamine using 3-hydroxyacyl-ACP as the acyl donor. Is involved in the biosynthesis of lipid A, a phosphorylated glycolipid that anchors the lipopolysaccharide to the outer membrane of the cell. The polypeptide is UDP-3-O-acylglucosamine N-acyltransferase (Bordetella parapertussis (strain 12822 / ATCC BAA-587 / NCTC 13253)).